Reading from the N-terminus, the 257-residue chain is Large ribosomal subunit protein uL2 (257 aa).

The disordered stretch occupies residues 207-231; the sequence is VEHPFGGGNHQHIGKPSTIRRDAPA.

It belongs to the universal ribosomal protein uL2 family. Component of the large ribosomal subunit.

It is found in the cytoplasm. Functionally, component of the large ribosomal subunit. The ribosome is a large ribonucleoprotein complex responsible for the synthesis of proteins in the cell. In Xenopus laevis (African clawed frog), this protein is Large ribosomal subunit protein uL2 (rpl8).